Here is a 214-residue protein sequence, read N- to C-terminus: Cysteine-rich venom protein LEI1 (214 aa).

The N-terminal stretch at 1–18 is a signal peptide; sequence MIAFILLSLAAVLQQSFG. The SCP domain occupies 37–165; it reads VNMHNSLRRS…YYSYFYVCQY (129 aa). Disulfide bonds link Cys-74-Cys-152, Cys-91-Cys-166, Cys-147-Cys-163, Cys-185-Cys-192, and Cys-188-Cys-197. Residues 201–214 enclose the ShKT domain; that stretch reads CTVENKFTNCNTLV.

It belongs to the CRISP family. As to expression, expressed by the venom gland.

The protein resides in the secreted. Blocks contraction of smooth muscle elicited by high potassium-induced depolarization, but does not block caffeine-stimulated contraction. May target voltage-gated calcium channels on smooth muscle. The protein is Cysteine-rich venom protein LEI1 of Leioheterodon madagascariensis (Malagasy giant hognose snake).